We begin with the raw amino-acid sequence, 65 residues long: Disintegrin CC8B (65 aa).

Residues 1 to 65 (NSAHPCCDPV…DCPRNPWHKS (65 aa)) enclose the Disintegrin domain. 4 disulfides stabilise this stretch: Cys-6/Cys-29, Cys-20/Cys-26, Cys-25/Cys-50, and Cys-38/Cys-57. Positions 42–44 (WGD) match the Cell attachment site; atypical (WGD) motif.

The protein belongs to the disintegrin family. Dimeric disintegrin subfamily. As to quaternary structure, heterodimer with CC8A; disulfide-linked. As to expression, expressed by the venom gland.

Its subcellular location is the secreted. Functionally, inhibits integrins alpha-IIb/beta-3 (ITGA2B/ITGB3), alpha-V/beta-3 (ITGAV/ITGB3), and alpha-5/beta-1 (ITGA5/ITGB1). This is Disintegrin CC8B from Cerastes cerastes (Horned desert viper).